An 876-amino-acid polypeptide reads, in one-letter code: Alanine--tRNA ligase (876 aa).

Residues His-565, His-569, Cys-667, and His-671 each coordinate Zn(2+).

This sequence belongs to the class-II aminoacyl-tRNA synthetase family. The cofactor is Zn(2+).

Its subcellular location is the cytoplasm. The catalysed reaction is tRNA(Ala) + L-alanine + ATP = L-alanyl-tRNA(Ala) + AMP + diphosphate. Its function is as follows. Catalyzes the attachment of alanine to tRNA(Ala) in a two-step reaction: alanine is first activated by ATP to form Ala-AMP and then transferred to the acceptor end of tRNA(Ala). Also edits incorrectly charged Ser-tRNA(Ala) and Gly-tRNA(Ala) via its editing domain. The polypeptide is Alanine--tRNA ligase (Staphylococcus aureus (strain bovine RF122 / ET3-1)).